The primary structure comprises 428 residues: Enolase 3 (428 aa).

Gln163 contacts (2R)-2-phosphoglycerate. The active-site Proton donor is Glu205. Residues Asp242, Glu286, and Asp313 each coordinate Mg(2+). (2R)-2-phosphoglycerate is bound by residues Lys338, Arg367, Ser368, and Lys389. Lys338 acts as the Proton acceptor in catalysis.

The protein belongs to the enolase family. Requires Mg(2+) as cofactor.

The protein localises to the cytoplasm. The protein resides in the secreted. It localises to the cell surface. The enzyme catalyses (2R)-2-phosphoglycerate = phosphoenolpyruvate + H2O. It participates in carbohydrate degradation; glycolysis; pyruvate from D-glyceraldehyde 3-phosphate: step 4/5. In terms of biological role, catalyzes the reversible conversion of 2-phosphoglycerate (2-PG) into phosphoenolpyruvate (PEP). It is essential for the degradation of carbohydrates via glycolysis. In Lactobacillus johnsonii (strain CNCM I-12250 / La1 / NCC 533), this protein is Enolase 3.